The sequence spans 458 residues: tRNA modification GTPase MnmE (458 aa).

Positions 26, 88, and 127 each coordinate (6S)-5-formyl-5,6,7,8-tetrahydrofolate. Residues 224-378 form the TrmE-type G domain; it reads GLSTAIIGRP…IEDRINQLFF (155 aa). K(+) is bound at residue Asn234. Residues 234 to 239, 253 to 259, and 278 to 281 contribute to the GTP site; these read NVGKSS, TDIAGTT, and DTAG. Ser238 serves as a coordination point for Mg(2+). K(+) contacts are provided by Thr253, Ile255, and Thr258. Mg(2+) is bound at residue Thr259. Lys458 lines the (6S)-5-formyl-5,6,7,8-tetrahydrofolate pocket.

It belongs to the TRAFAC class TrmE-Era-EngA-EngB-Septin-like GTPase superfamily. TrmE GTPase family. As to quaternary structure, homodimer. Heterotetramer of two MnmE and two MnmG subunits. It depends on K(+) as a cofactor.

The protein localises to the cytoplasm. Its function is as follows. Exhibits a very high intrinsic GTPase hydrolysis rate. Involved in the addition of a carboxymethylaminomethyl (cmnm) group at the wobble position (U34) of certain tRNAs, forming tRNA-cmnm(5)s(2)U34. This chain is tRNA modification GTPase MnmE, found in Streptococcus pyogenes serotype M6 (strain ATCC BAA-946 / MGAS10394).